The following is a 172-amino-acid chain: Large ribosomal subunit protein uL10 (172 aa).

This sequence belongs to the universal ribosomal protein uL10 family. As to quaternary structure, part of the ribosomal stalk of the 50S ribosomal subunit. The N-terminus interacts with L11 and the large rRNA to form the base of the stalk. The C-terminus forms an elongated spine to which L12 dimers bind in a sequential fashion forming a multimeric L10(L12)X complex.

Functionally, forms part of the ribosomal stalk, playing a central role in the interaction of the ribosome with GTP-bound translation factors. This is Large ribosomal subunit protein uL10 from Rhodospirillum centenum (strain ATCC 51521 / SW).